Reading from the N-terminus, the 252-residue chain is Putative pinene synthase (252 aa).

Belongs to the terpene synthase family. Tpsa subfamily.

The protein is Putative pinene synthase of Fragaria ananassa (Strawberry).